The sequence spans 552 residues: FACT complex subunit POB3 (552 aa).

Over residues 190-205 (KKEESSNEVVPKKEDG) the composition is skewed to basic and acidic residues. 2 disordered regions span residues 190-209 (KKEESSNEVVPKKEDGAEGE) and 484-552 (QTAL…PKVE). The segment covering 490–529 (DSDEEDINMGSAGEDDESVDEDFQVSSDNDADEVAEEFDS) has biased composition (acidic residues). Residues 541-552 (DEERPSKKPKVE) are compositionally biased toward basic and acidic residues.

It belongs to the SSRP1 family. As to quaternary structure, forms a stable heterodimer with SPT16. The SPT16-POB3 dimer weakly associates with multiple molecules of NHP6 (NHP6A or NHP6B) to form the FACT (yFACT or SNP) complex. The FACT complex interacts with the CK2 (casein kinase II) complex subunits CKA1, CKA2, CKB1 and CKB2 and the components of the transcription machinery CHD1, CTR9, PAF1 and CDC73. The FACT complex interacts with the PAF1 complex. SPT16 interacts with SAS3 and POL1. Interacts directly with RFA1.

Its subcellular location is the nucleus. The protein resides in the chromosome. Its function is as follows. Component of the FACT complex, a general chromatin factor that acts to reorganize nucleosomes. The FACT complex is involved in multiple processes that require DNA as a template such as mRNA elongation, DNA replication and DNA repair. During transcription elongation the FACT complex acts as a histone chaperone that both destabilizes and restores nucleosomal structure. It facilitates the passage of RNA polymerase II and transcription by promoting the dissociation of one histone H2A-H2B dimer from the nucleosome, then subsequently promotes the reestablishment of the nucleosome following the passage of RNA polymerase II. Transcription elongation is promoted by the repression of transcription initiation from cryptic sites. Also acts in establishing transcription initiation complexes and promotes SPT15/TBP-binding to a TATA box. Together with replication factor-A protein (RPA), FACT may play a role in nucleosome deposition during DNA replication. This Saccharomyces cerevisiae (strain ATCC 204508 / S288c) (Baker's yeast) protein is FACT complex subunit POB3 (POB3).